Reading from the N-terminus, the 119-residue chain is NAD(P)H-quinone oxidoreductase subunit M (119 aa).

It belongs to the complex I NdhM subunit family. As to quaternary structure, NDH-1 can be composed of about 15 different subunits; different subcomplexes with different compositions have been identified which probably have different functions.

The protein localises to the cellular thylakoid membrane. The enzyme catalyses a plastoquinone + NADH + (n+1) H(+)(in) = a plastoquinol + NAD(+) + n H(+)(out). The catalysed reaction is a plastoquinone + NADPH + (n+1) H(+)(in) = a plastoquinol + NADP(+) + n H(+)(out). Its function is as follows. NDH-1 shuttles electrons from an unknown electron donor, via FMN and iron-sulfur (Fe-S) centers, to quinones in the respiratory and/or the photosynthetic chain. The immediate electron acceptor for the enzyme in this species is believed to be plastoquinone. Couples the redox reaction to proton translocation, and thus conserves the redox energy in a proton gradient. Cyanobacterial NDH-1 also plays a role in inorganic carbon-concentration. This chain is NAD(P)H-quinone oxidoreductase subunit M, found in Gloeothece citriformis (strain PCC 7424) (Cyanothece sp. (strain PCC 7424)).